Reading from the N-terminus, the 248-residue chain is UDP-2,3-diacylglucosamine hydrolase (248 aa).

5 residues coordinate Mn(2+): aspartate 7, histidine 9, aspartate 40, asparagine 78, and histidine 113. 78–79 lines the substrate pocket; the sequence is NR. 5 residues coordinate substrate: aspartate 121, serine 159, threonine 163, lysine 166, and histidine 194. 2 residues coordinate Mn(2+): histidine 194 and histidine 196.

This sequence belongs to the LpxH family. The cofactor is Mn(2+).

It localises to the cell inner membrane. It carries out the reaction UDP-2-N,3-O-bis[(3R)-3-hydroxytetradecanoyl]-alpha-D-glucosamine + H2O = 2-N,3-O-bis[(3R)-3-hydroxytetradecanoyl]-alpha-D-glucosaminyl 1-phosphate + UMP + 2 H(+). The protein operates within glycolipid biosynthesis; lipid IV(A) biosynthesis; lipid IV(A) from (3R)-3-hydroxytetradecanoyl-[acyl-carrier-protein] and UDP-N-acetyl-alpha-D-glucosamine: step 4/6. Its function is as follows. Hydrolyzes the pyrophosphate bond of UDP-2,3-diacylglucosamine to yield 2,3-diacylglucosamine 1-phosphate (lipid X) and UMP by catalyzing the attack of water at the alpha-P atom. Involved in the biosynthesis of lipid A, a phosphorylated glycolipid that anchors the lipopolysaccharide to the outer membrane of the cell. This is UDP-2,3-diacylglucosamine hydrolase from Pseudomonas savastanoi pv. phaseolicola (strain 1448A / Race 6) (Pseudomonas syringae pv. phaseolicola (strain 1448A / Race 6)).